The primary structure comprises 309 residues: Mitogen-activated protein kinase kinase 8 (309 aa).

The 253-residue stretch at leucine 53–leucine 305 folds into the Protein kinase domain. Residues leucine 59–valine 67 and lysine 82 contribute to the ATP site. Aspartate 167 acts as the Proton acceptor in catalysis. 2 positions are modified to phosphoserine: serine 195 and serine 201. Threonine 205 bears the Phosphothreonine mark.

Belongs to the protein kinase superfamily. STE Ser/Thr protein kinase family. MAP kinase kinase subfamily. Post-translationally, phosphorylation at Ser-195 and Ser-201 by MAP kinase kinase kinases positively regulates kinase activity.

It catalyses the reaction L-seryl-[protein] + ATP = O-phospho-L-seryl-[protein] + ADP + H(+). The enzyme catalyses L-threonyl-[protein] + ATP = O-phospho-L-threonyl-[protein] + ADP + H(+). The catalysed reaction is L-tyrosyl-[protein] + ATP = O-phospho-L-tyrosyl-[protein] + ADP + H(+). The polypeptide is Mitogen-activated protein kinase kinase 8 (MKK8) (Arabidopsis thaliana (Mouse-ear cress)).